The sequence spans 286 residues: Release factor glutamine methyltransferase (286 aa).

D148 and N194 together coordinate S-adenosyl-L-methionine. 194-197 (NPPY) contributes to the substrate binding site.

The protein belongs to the protein N5-glutamine methyltransferase family. PrmC subfamily.

It catalyses the reaction L-glutaminyl-[peptide chain release factor] + S-adenosyl-L-methionine = N(5)-methyl-L-glutaminyl-[peptide chain release factor] + S-adenosyl-L-homocysteine + H(+). Its function is as follows. Methylates the class 1 translation termination release factors RF1/PrfA and RF2/PrfB on the glutamine residue of the universally conserved GGQ motif. This chain is Release factor glutamine methyltransferase, found in Leptospira interrogans serogroup Icterohaemorrhagiae serovar Lai (strain 56601).